We begin with the raw amino-acid sequence, 876 residues long: Alanine--tRNA ligase (876 aa).

Zn(2+) is bound by residues His-564, His-568, Cys-666, and His-670.

This sequence belongs to the class-II aminoacyl-tRNA synthetase family. The cofactor is Zn(2+).

It localises to the cytoplasm. The enzyme catalyses tRNA(Ala) + L-alanine + ATP = L-alanyl-tRNA(Ala) + AMP + diphosphate. Functionally, catalyzes the attachment of alanine to tRNA(Ala) in a two-step reaction: alanine is first activated by ATP to form Ala-AMP and then transferred to the acceptor end of tRNA(Ala). Also edits incorrectly charged Ser-tRNA(Ala) and Gly-tRNA(Ala) via its editing domain. The protein is Alanine--tRNA ligase of Porphyromonas gingivalis (strain ATCC BAA-308 / W83).